We begin with the raw amino-acid sequence, 205 residues long: Dephospho-CoA kinase (205 aa).

The 191-residue stretch at 15–205 (VIGLTGGIAT…VERALDQASI (191 aa)) folds into the DPCK domain. 23–28 (ATGKST) is a binding site for ATP.

It belongs to the CoaE family.

It localises to the cytoplasm. It carries out the reaction 3'-dephospho-CoA + ATP = ADP + CoA + H(+). The protein operates within cofactor biosynthesis; coenzyme A biosynthesis; CoA from (R)-pantothenate: step 5/5. Its function is as follows. Catalyzes the phosphorylation of the 3'-hydroxyl group of dephosphocoenzyme A to form coenzyme A. This chain is Dephospho-CoA kinase, found in Gloeobacter violaceus (strain ATCC 29082 / PCC 7421).